A 527-amino-acid chain; its full sequence is Probable malate:quinone oxidoreductase (527 aa).

The protein belongs to the MQO family. Requires FAD as cofactor.

The enzyme catalyses (S)-malate + a quinone = a quinol + oxaloacetate. Its pathway is carbohydrate metabolism; tricarboxylic acid cycle; oxaloacetate from (S)-malate (quinone route): step 1/1. In Pectobacterium atrosepticum (strain SCRI 1043 / ATCC BAA-672) (Erwinia carotovora subsp. atroseptica), this protein is Probable malate:quinone oxidoreductase.